We begin with the raw amino-acid sequence, 291 residues long: HTH-type transcriptional regulator CitR (291 aa).

The HTH lysR-type domain maps to 1-58; the sequence is MDFKWLHTFVTAAKYENFRKTAETLFLSQPTVTVHIKQLEKEISCKLFERKGRQIQLT. The segment at residues 18 to 37 is a DNA-binding region (H-T-H motif); that stretch reads FRKTAETLFLSQPTVTVHIK.

It belongs to the LysR transcriptional regulatory family.

The protein resides in the cytoplasm. Functionally, negative regulatory protein for the citA gene for citrate synthase I. This Bacillus subtilis (strain 168) protein is HTH-type transcriptional regulator CitR (citR).